A 105-amino-acid chain; its full sequence is uncharacterized protein (105 aa).

This is an uncharacterized protein from Mycobacterium bovis (strain ATCC BAA-935 / AF2122/97).